A 467-amino-acid polypeptide reads, in one-letter code: Venom prothrombin activator omicarin-C catalytic subunit (467 aa).

Positions 1 to 20 (MAPQLLLCLILTFLWSLPEA) are cleaved as a signal peptide. Positions 21-40 (ESNVFLKSKVANRFLQRTKR) are excised as a propeptide. In terms of domain architecture, Gla spans 41-86 (ANSLFEEFRSGNIERECIEERCSKEEAREVFEDDEKTETFWNVYVD). 4-carboxyglutamate is present on residues glutamate 46, glutamate 47, glutamate 54, glutamate 56, glutamate 59, glutamate 60, glutamate 65, glutamate 66, glutamate 69, glutamate 72, and glutamate 75. Cysteines 57 and 62 form a disulfide. One can recognise an EGF-like 1; calcium-binding domain in the interval 86–122 (DGDQCSSNPCHYRGTCKDGIGSYTCTCLFGYEGKNCE). 11 disulfide bridges follow: cysteine 90–cysteine 101, cysteine 95–cysteine 110, cysteine 112–cysteine 121, cysteine 129–cysteine 140, cysteine 136–cysteine 149, cysteine 151–cysteine 164, cysteine 172–cysteine 329, cysteine 216–cysteine 221, cysteine 236–cysteine 252, cysteine 377–cysteine 391, and cysteine 402–cysteine 430. The O-linked (Hex...) serine glycan is linked to serine 92. In terms of domain architecture, EGF-like 2 spans 129 to 164 (CRVDNGNCWHFCKPVQNDIQCSCAEGYLLGEDGHSC). A propeptide spans 182–209 (REASLPDFVQSQNATLLKKSDNPSPDIR) (activation peptide). Positions 210–454 (IVNGMDCKLG…FILWIKRIMR (245 aa)) constitute a Peptidase S1 domain. The Charge relay system role is filled by histidine 251. Asparagine 254 carries N-linked (GlcNAc...) asparagine glycosylation. Aspartate 309 (charge relay system) is an active-site residue. Catalysis depends on serine 406, which acts as the Charge relay system.

This sequence belongs to the peptidase S1 family. Snake venom subfamily. As to quaternary structure, heterodimer of a light and a heavy chains; disulfide-linked. Is associated with omicarin-C non-catalytic subunit (AC Q58L90) in a non-covalent manner. Gamma-carboxyglutamate residues are formed by vitamin K dependent carboxylation. These residues are essential for the binding of calcium. As to expression, expressed by the venom gland.

Its subcellular location is the secreted. The catalysed reaction is Selective cleavage of Arg-|-Thr and then Arg-|-Ile bonds in prothrombin to form thrombin.. Its activity is regulated as follows. Activated by calcium and negatively charged phospholipids. Functionally, snake prothrombin activator that attacks the hemostatic system of prey. This catalytic subunit is functionally similar to blood coagulation factor Xa. It requires a non-catalytic subunit present in the venom, which is similar to coagulation factor Va, to be fully active. This is Venom prothrombin activator omicarin-C catalytic subunit from Oxyuranus microlepidotus (Inland taipan).